A 329-amino-acid polypeptide reads, in one-letter code: Flotillin-like protein FloA (329 aa).

2 helical membrane passes run 4–24 (IAFI…FAIV) and 26–46 (VGLW…TLIG).

Belongs to the flotillin-like FloA family. As to quaternary structure, homooligomerizes.

The protein resides in the cell membrane. Its subcellular location is the membrane raft. In terms of biological role, found in functional membrane microdomains (FMM) that may be equivalent to eukaryotic membrane rafts. FMMs are highly dynamic and increase in number as cells age. Flotillins are thought to be important factors in membrane fluidity. This chain is Flotillin-like protein FloA, found in Acetivibrio thermocellus (strain ATCC 27405 / DSM 1237 / JCM 9322 / NBRC 103400 / NCIMB 10682 / NRRL B-4536 / VPI 7372) (Clostridium thermocellum).